The following is a 438-amino-acid chain: Cyclic 2,3-diphosphoglycerate synthetase (438 aa).

The protein belongs to the cyclic 2,3-diphosphoglycerate synthetase family.

It is found in the cytoplasm. It catalyses the reaction (2R)-2,3-bisphosphoglycerate + ATP + H(+) = cyclic (2R)-2,3-bisphosphoglycerate + ADP + phosphate. In terms of biological role, catalyzes the formation of cyclic 2,3-diphosphoglycerate (cDPG) by formation of an intramolecular phosphoanhydride bond at the expense of ATP. The polypeptide is Cyclic 2,3-diphosphoglycerate synthetase (Thermococcus gammatolerans (strain DSM 15229 / JCM 11827 / EJ3)).